Consider the following 124-residue polypeptide: Small ribosomal subunit protein uS12 (124 aa).

Asp-89 is subject to 3-methylthioaspartic acid.

This sequence belongs to the universal ribosomal protein uS12 family. Part of the 30S ribosomal subunit. Contacts proteins S8 and S17. May interact with IF1 in the 30S initiation complex.

With S4 and S5 plays an important role in translational accuracy. In terms of biological role, interacts with and stabilizes bases of the 16S rRNA that are involved in tRNA selection in the A site and with the mRNA backbone. Located at the interface of the 30S and 50S subunits, it traverses the body of the 30S subunit contacting proteins on the other side and probably holding the rRNA structure together. The combined cluster of proteins S8, S12 and S17 appears to hold together the shoulder and platform of the 30S subunit. The sequence is that of Small ribosomal subunit protein uS12 from Pasteurella multocida (strain Pm70).